Consider the following 261-residue polypeptide: Hydroxylase cctR (261 aa).

A helical membrane pass occupies residues 38 to 58 (VFVSLLILSNTISFGLLGWIG). The N-linked (GlcNAc...) asparagine glycan is linked to N95. Short sequence motifs (HXXHC) lie at residues 146-150 (HEIHC) and 176-180 (HIAHC).

This sequence belongs to the ustYa family.

It localises to the membrane. The protein operates within mycotoxin biosynthesis. Functionally, hydroxylase; part of the gene cluster that mediates the biosynthesis of the mycotoxin cyclochlorotine, a hepatotoxic and carcinogenic cyclic chlorinated pentapeptide. Within the pathway, cctR performs the last step by hydroxylating cyclochlorotine to yield hydroxycyclochlorotine. The NRPS cctN initially catalyzes the condensation of L-serine (Ser), Pro, L-2-aminobutyrate (2Abu), Ser, and beta-Phe in this order to produce isocyclotine. After the dichlorination of Pro2 catalyzed by cctP2 to produce isocyclochlorotine, the cctO-mediated transacylation of isocyclochlorotine can furnish cyclochlorotine. The subsequent hydroxylation of cyclochlorotine by cctR yields hydroxycyclochlorotine as the final product. CctP1 probably acts as a phenylalanine aminomutase and provides the uncommon building block beta-Phe. Furthermore, 2Abu can be synthesized from threonine by one of the threonine dehydratases and transaminases localized outside of the cluster. The functions of the remaining proteins encoded by the cluster, cctM and cctT, have not been identified yet. The sequence is that of Hydroxylase cctR from Talaromyces islandicus (Penicillium islandicum).